The primary structure comprises 207 residues: Small ribosomal subunit protein uS4 (207 aa).

The segment at K31 to Q55 is disordered. Residues G42–G53 show a composition bias toward polar residues. Residues S97–L160 form the S4 RNA-binding domain.

This sequence belongs to the universal ribosomal protein uS4 family. In terms of assembly, part of the 30S ribosomal subunit. Contacts protein S5. The interaction surface between S4 and S5 is involved in control of translational fidelity.

In terms of biological role, one of the primary rRNA binding proteins, it binds directly to 16S rRNA where it nucleates assembly of the body of the 30S subunit. Functionally, with S5 and S12 plays an important role in translational accuracy. The chain is Small ribosomal subunit protein uS4 from Burkholderia thailandensis (strain ATCC 700388 / DSM 13276 / CCUG 48851 / CIP 106301 / E264).